The primary structure comprises 234 residues: Orotidine 5'-phosphate decarboxylase (234 aa).

Substrate contacts are provided by residues Asp-14, Lys-36, 63 to 72 (DMKLLDIDNT), Thr-118, Arg-179, Gln-188, Gly-208, and Arg-209. Residue Lys-65 is the Proton donor of the active site.

The protein belongs to the OMP decarboxylase family. Type 1 subfamily. Homodimer.

It carries out the reaction orotidine 5'-phosphate + H(+) = UMP + CO2. Its pathway is pyrimidine metabolism; UMP biosynthesis via de novo pathway; UMP from orotate: step 2/2. Its function is as follows. Catalyzes the decarboxylation of orotidine 5'-monophosphate (OMP) to uridine 5'-monophosphate (UMP). The polypeptide is Orotidine 5'-phosphate decarboxylase (Rhizobium meliloti (strain 1021) (Ensifer meliloti)).